The sequence spans 232 residues: Response regulator MprA (232 aa).

In terms of domain architecture, Response regulatory spans 4–118 (RILVVDDDRA…ELLARMRALL (115 aa)). D48 carries the post-translational modification 4-aspartylphosphate. Residues 131 to 229 (SVAMTFSDLS…VRGVGYVLRE (99 aa)) constitute a DNA-binding region (ompR/PhoB-type).

In terms of processing, phosphorylated and dephosphorylated by MprB.

It localises to the cytoplasm. Its function is as follows. Member of the two-component regulatory system MprB/MprA which contributes to maintaining a balance among several systems involved in stress resistance and is required for establishment and maintenance of persistent infection in the host. Functions as a transcriptional regulator that recognizes a 19-bp nucleotide motif comprizing two loosely conserved 8-bp direct DNA-binding motif repeats separated by a 3-bp spacer region. The protein is Response regulator MprA (mprA) of Mycobacterium ulcerans (strain Agy99).